The sequence spans 802 residues: ATP-dependent zinc metalloprotease FTSH 3, mitochondrial (802 aa).

The N-terminal 21 residues, 1 to 21 (MSLSSLSRALARSARSSRQRQ), are a transit peptide targeting the mitochondrion. Residues 1–23 (MSLSSLSRALARSARSSRQRQGS) show a composition bias toward low complexity. 2 disordered regions span residues 1 to 33 (MSLS…GLRA) and 85 to 120 (DKSK…SGDQ). Basic and acidic residues predominate over residues 85–113 (DKSKKNHGKHSEEENKGKGDESDKSDSKK). A helical membrane pass occupies residues 133–153 (MIAPLFLFGLLLLSASASSSE). Residue 360–367 (GPPGTGKT) participates in ATP binding. His585 contacts Zn(2+). Glu586 is a catalytic residue. Zn(2+) contacts are provided by His589 and Asp661. Residues 773-802 (KQGFQDEDSNRNAELSNADGASSLGEAVAS) form a disordered region.

This sequence in the N-terminal section; belongs to the AAA ATPase family. The protein in the C-terminal section; belongs to the peptidase M41 family. Zn(2+) is required as a cofactor.

It localises to the mitochondrion inner membrane. Its function is as follows. Probable ATP-dependent zinc metallopeptidase. In Oryza sativa subsp. japonica (Rice), this protein is ATP-dependent zinc metalloprotease FTSH 3, mitochondrial (FTSH3).